We begin with the raw amino-acid sequence, 218 residues long: tRNA (cytidine(56)-2'-O)-methyltransferase (218 aa).

Residues L81, 106 to 110 (GAEKV), and 124 to 131 (IGNQPHSE) each bind S-adenosyl-L-methionine. The interval 170-218 (KVGEEGPSGGAPGVRAERGRGGRGEGVQGADEVRGHKRGATDRDLGDET) is disordered. Positions 200-218 (DEVRGHKRGATDRDLGDET) are enriched in basic and acidic residues.

It belongs to the aTrm56 family. Homodimer.

The protein resides in the cytoplasm. The catalysed reaction is cytidine(56) in tRNA + S-adenosyl-L-methionine = 2'-O-methylcytidine(56) in tRNA + S-adenosyl-L-homocysteine + H(+). In terms of biological role, specifically catalyzes the AdoMet-dependent 2'-O-ribose methylation of cytidine at position 56 in tRNAs. This chain is tRNA (cytidine(56)-2'-O)-methyltransferase, found in Ignicoccus hospitalis (strain KIN4/I / DSM 18386 / JCM 14125).